The primary structure comprises 321 residues: Arabinan endo-1,5-alpha-L-arabinosidase A (321 aa).

The signal sequence occupies residues 1–19 (MYQLLSVASVPLLASLVHG). Asp-34 acts as the Proton acceptor in catalysis. Glu-200 functions as the Proton donor in the catalytic mechanism. The N-linked (GlcNAc...) asparagine glycan is linked to Asn-295.

The protein belongs to the glycosyl hydrolase 43 family.

The catalysed reaction is Endohydrolysis of (1-&gt;5)-alpha-arabinofuranosidic linkages in (1-&gt;5)-arabinans.. It functions in the pathway glycan metabolism; L-arabinan degradation. Its preferred substrate is linear 1,5-alpha-L-arabinan. The enzyme activity is progressively reduced as 1,5-alpha-chains become shorter or more highly substituted. This Aspergillus niger protein is Arabinan endo-1,5-alpha-L-arabinosidase A (abnA).